The primary structure comprises 483 residues: Altronate oxidoreductase (483 aa).

18–29 (IIQFGEGNFLRA) serves as a coordination point for NAD(+).

The protein belongs to the mannitol dehydrogenase family. UxaB subfamily.

The catalysed reaction is D-altronate + NAD(+) = keto-D-tagaturonate + NADH + H(+). Its pathway is carbohydrate metabolism; pentose and glucuronate interconversion. The chain is Altronate oxidoreductase (uxaB) from Escherichia coli O157:H7.